We begin with the raw amino-acid sequence, 383 residues long: Chaperone protein DnaJ (383 aa).

The 66-residue stretch at 5–70 (DYYDVLGVSK…DKKAAYDRYG (66 aa)) folds into the J domain. The CR-type zinc-finger motif lies at 142–220 (GMQKTISVPG…CRGAGREEKT (79 aa)). Zn(2+)-binding residues include Cys-155, Cys-158, Cys-172, Cys-175, Cys-194, Cys-197, Cys-208, and Cys-211. 4 CXXCXGXG motif repeats span residues 155 to 162 (CSACEGTG), 172 to 179 (CPTCSGMG), 194 to 201 (CPTCSGMG), and 208 to 215 (CQACRGAG).

Belongs to the DnaJ family. Homodimer. It depends on Zn(2+) as a cofactor.

The protein resides in the cytoplasm. Participates actively in the response to hyperosmotic and heat shock by preventing the aggregation of stress-denatured proteins and by disaggregating proteins, also in an autonomous, DnaK-independent fashion. Unfolded proteins bind initially to DnaJ; upon interaction with the DnaJ-bound protein, DnaK hydrolyzes its bound ATP, resulting in the formation of a stable complex. GrpE releases ADP from DnaK; ATP binding to DnaK triggers the release of the substrate protein, thus completing the reaction cycle. Several rounds of ATP-dependent interactions between DnaJ, DnaK and GrpE are required for fully efficient folding. Also involved, together with DnaK and GrpE, in the DNA replication of plasmids through activation of initiation proteins. This is Chaperone protein DnaJ from Dinoroseobacter shibae (strain DSM 16493 / NCIMB 14021 / DFL 12).